The sequence spans 227 residues: MTQRAIVLLSGGLDSATVLAMARAQGFETYALSMRYGQRHSSELEAAKRVAAALGAVRHEIVDLDLRRFGGSALTDDALEVPTDGASGGIPVTYVPARNTIMLSLALGWAEAVGGRDLFFGANAVDYSGYPDCRPEYVAAYETLANLATKAGVEGDRFRVHAPIIDMTKGEIIRAGIALGVDYSLTVSCYQADDDGRACGVCDSCRIRRAGFEAAGVPDPTRYQAAA.

Residue 9-19 participates in ATP binding; that stretch reads LSGGLDSATVL. Residues Cys189, Cys199, Cys202, and Cys205 each coordinate Zn(2+).

The protein belongs to the QueC family. Requires Zn(2+) as cofactor.

The catalysed reaction is 7-carboxy-7-deazaguanine + NH4(+) + ATP = 7-cyano-7-deazaguanine + ADP + phosphate + H2O + H(+). It functions in the pathway purine metabolism; 7-cyano-7-deazaguanine biosynthesis. Its function is as follows. Catalyzes the ATP-dependent conversion of 7-carboxy-7-deazaguanine (CDG) to 7-cyano-7-deazaguanine (preQ(0)). This is 7-cyano-7-deazaguanine synthase from Cupriavidus taiwanensis (strain DSM 17343 / BCRC 17206 / CCUG 44338 / CIP 107171 / LMG 19424 / R1) (Ralstonia taiwanensis (strain LMG 19424)).